Consider the following 201-residue polypeptide: MMLSDNDIIKEIDSGGLVIEPFNKEFVGPCSYDITLGDEFIVYTDEVYDLKKELNHNKFKIENSIMVCPLCYELDDEKIEYFKNKYGVDVVVKGGLLGTTTEFVELPNDICAQYQGRSSFGRVFLQSHQTAGWIDAGFKGKITLEIVAYDKPVILYKNQRIGQLIFSKTLTPANIGYCDRKGSKYGGQNSVNASLIHKDEI.

Residues 117–122 (RSSFGR), aspartate 135, 143–145 (TLE), glutamine 163, tyrosine 177, and glutamine 188 each bind dCTP. Glutamate 145 serves as the catalytic Proton donor/acceptor.

Belongs to the dCTP deaminase family. As to quaternary structure, homotrimer.

It carries out the reaction dCTP + 2 H2O = dUMP + NH4(+) + diphosphate. Its pathway is pyrimidine metabolism; dUMP biosynthesis; dUMP from dCTP: step 1/1. Functionally, bifunctional enzyme that catalyzes both the deamination of dCTP to dUTP and the hydrolysis of dUTP to dUMP without releasing the toxic dUTP intermediate. The protein is dCTP deaminase, dUMP-forming of Methanococcus aeolicus (strain ATCC BAA-1280 / DSM 17508 / OCM 812 / Nankai-3).